We begin with the raw amino-acid sequence, 82 residues long: uncharacterized protein (82 aa).

The protein resides in the plastid. It is found in the chloroplast. This is an uncharacterized protein from Vicia faba (Broad bean).